Consider the following 688-residue polypeptide: Transcription factor GTE9 (688 aa).

Residues 1 to 36 form a disordered region; the sequence is MTERNGGFPGDYCFEAPGGDYDEGSDSPRVSEGSNC. A Bromo domain is found at 132 to 238; it reads TAVMLLMKQC…KFFEVRWKTL (107 aa). One can recognise an NET domain in the interval 280 to 361; the sequence is ENVVDPAKRV…EHLREIQNKK (82 aa). Residues 423-505 are disordered; that stretch reads GNSLGSVSGD…AQNEKQLPPE (83 aa). S478 carries the phosphoserine modification. Positions 491–500 are enriched in polar residues; it reads QDGNSAQNEK. Positions 505–688 are transcription activation domain; the sequence is EKSYRAAILK…EIDIEEGEID (184 aa). Positions 534–613 form a coiled coil; the sequence is TRDPEKLQRE…QSVELNENAK (80 aa). Positions 660–688 are disordered; the sequence is FMKQDEDEEEADPLTSPAPEIDIEEGEID.

Interacts with BT1.

Its subcellular location is the nucleus. The protein is Transcription factor GTE9 (GTE9) of Arabidopsis thaliana (Mouse-ear cress).